The primary structure comprises 268 residues: NAD kinase (268 aa).

Aspartate 45 functions as the Proton acceptor in the catalytic mechanism. NAD(+) contacts are provided by residues 45-46, 122-123, arginine 148, aspartate 150, 161-166, alanine 185, and glutamine 223; these read DG, NE, and TAYGKS.

The protein belongs to the NAD kinase family. Requires a divalent metal cation as cofactor.

It localises to the cytoplasm. It catalyses the reaction NAD(+) + ATP = ADP + NADP(+) + H(+). Its function is as follows. Involved in the regulation of the intracellular balance of NAD and NADP, and is a key enzyme in the biosynthesis of NADP. Catalyzes specifically the phosphorylation on 2'-hydroxyl of the adenosine moiety of NAD to yield NADP. The protein is NAD kinase of Latilactobacillus sakei subsp. sakei (strain 23K) (Lactobacillus sakei subsp. sakei).